The sequence spans 410 residues: Peptidase T (410 aa).

His79 lines the Zn(2+) pocket. Residue Asp81 is part of the active site. Asp142 lines the Zn(2+) pocket. Glu176 (proton acceptor) is an active-site residue. 3 residues coordinate Zn(2+): Glu177, Asp199, and His381.

It belongs to the peptidase M20B family. The cofactor is Zn(2+).

The protein resides in the cytoplasm. It carries out the reaction Release of the N-terminal residue from a tripeptide.. Functionally, cleaves the N-terminal amino acid of tripeptides. This chain is Peptidase T, found in Brevibacillus brevis (strain 47 / JCM 6285 / NBRC 100599).